Consider the following 293-residue polypeptide: Prohibitin-2 (293 aa).

The chain crosses the membrane as a helical; Signal-anchor for type II membrane protein span at residues phenylalanine 21–leucine 41. Residues glycine 190–alanine 235 are a coiled coil.

The protein belongs to the prohibitin family. In terms of assembly, the mitochondrial prohibitin complex consists of two subunits (PHB1 and PHB2), assembled into a membrane-associated ring-shaped supercomplex of approximately 1 mDa.

Its subcellular location is the mitochondrion inner membrane. It is found in the cytoplasm. The protein resides in the nucleus. The protein localises to the cell membrane. Its function is as follows. Protein with pleiotropic attributes mediated in a cell-compartment- and tissue-specific manner, which include the plasma membrane-associated cell signaling functions, mitochondrial chaperone, and transcriptional co-regulator of transcription factors and sex steroid hormones in the nucleus. In the mitochondria, together with PHB, forms large ring complexes (prohibitin complexes) in the inner mitochondrial membrane (IMM) and functions as a chaperone protein that stabilizes mitochondrial respiratory enzymes and maintains mitochondrial integrity in the IMM, which is required for mitochondrial morphogenesis, neuronal survival, and normal lifespan. In terms of biological role, in the nucleus, serves as transcriptional co-regulator. The sequence is that of Prohibitin-2 (phbB) from Dictyostelium discoideum (Social amoeba).